The following is a 259-amino-acid chain: Imidazole glycerol phosphate synthase subunit HisF (259 aa).

Active-site residues include Asp11 and Asp130.

Belongs to the HisA/HisF family. In terms of assembly, heterodimer of HisH and HisF.

Its subcellular location is the cytoplasm. The enzyme catalyses 5-[(5-phospho-1-deoxy-D-ribulos-1-ylimino)methylamino]-1-(5-phospho-beta-D-ribosyl)imidazole-4-carboxamide + L-glutamine = D-erythro-1-(imidazol-4-yl)glycerol 3-phosphate + 5-amino-1-(5-phospho-beta-D-ribosyl)imidazole-4-carboxamide + L-glutamate + H(+). It participates in amino-acid biosynthesis; L-histidine biosynthesis; L-histidine from 5-phospho-alpha-D-ribose 1-diphosphate: step 5/9. IGPS catalyzes the conversion of PRFAR and glutamine to IGP, AICAR and glutamate. The HisF subunit catalyzes the cyclization activity that produces IGP and AICAR from PRFAR using the ammonia provided by the HisH subunit. This chain is Imidazole glycerol phosphate synthase subunit HisF, found in Variovorax paradoxus (strain S110).